A 539-amino-acid polypeptide reads, in one-letter code: Zinc finger and BTB domain-containing protein 7B (539 aa).

In terms of domain architecture, BTB spans 34-115; that stretch reads CDLTIRTQGL…AYTATLTTSS (82 aa). A Phosphoserine modification is found at Ser150. The tract at residues 171-308 is disordered; it reads ASGVPNGEDS…SPEELGSDED (138 aa). Over residues 182-196 the composition is skewed to pro residues; the sequence is PQVPLPPPPPPPPRP. Residues 197-206 are compositionally biased toward basic residues; sequence VARRSRKPRK. 2 positions are modified to N6-acetyllysine; by EP300; alternate: Lys206 and Lys212. Glycyl lysine isopeptide (Lys-Gly) (interchain with G-Cter in ubiquitin); alternate cross-links involve residues Lys206 and Lys212. The span at 273 to 282 shows a compositional bias: acidic residues; the sequence is YEGEEEEEEL. At Lys335 the chain carries N6-acetyllysine; by EP300; alternate. Lys335 is covalently cross-linked (Glycyl lysine isopeptide (Lys-Gly) (interchain with G-Cter in ubiquitin); alternate). The interval 344–400 is required for interaction with and acetylation by EP300; sequence MPQECPVCHKIIHGAGKLPRHMRTHTGEKPFACEVCGVRFTRNDKLKIHMRKHTGER. A C2H2-type 1 zinc finger spans residues 346–368; sequence QECPVCHKIIHGAGKLPRHMRTH. Thr369 carries the phosphothreonine modification. C2H2-type zinc fingers lie at residues 374–396 and 402–424; these read FACEVCGVRFTRNDKLKIHMRKH and YSCPHCPARFLHSYDLKNHMHLH. The C2H2-type 4; atypical zinc finger occupies 430-454; that stretch reads YECHLCHKAFAKEDHLQRHLKGQNC. 2 disordered regions span residues 458–486 and 501–539; these read RTRRRRKDDAPPHYPPPSTAAASPAGLDL and FWEQSAPTGPPVSTPGPPDDDEEEGAPTTPQAEGAMESS. Residues 508–517 are compositionally biased toward pro residues; sequence TGPPVSTPGP.

As to quaternary structure, homodimerizes. Interacts with NCL, NEDD4 and YBX1. Interacts with HNRNPU (via RNA-binding RGG-box region); the interaction facilitates the recruitment of long non-coding RNA Blnc1 by ZBTB7B. Interacts with HDAC4 and HDAC5; the interaction allows the recruitment of HDAC4 and HDAC5 on CD8 loci for deacetylation and possible inhibition of CD8 genes expression. Post-translationally, acetylated directly and specifically by EP300. EP300-mediated acetylation of Lys-206, Lys-212 and Lys-335 stabilizes the protein by antagonizing ubiquitin conjugation. In terms of processing, ubiquitinated, leading to proteasomal degradation. Competes with acetylation on Lys-206, Lys-212 and Lys-335.

The protein localises to the nucleus. In terms of biological role, transcription regulator that acts as a key regulator of lineage commitment of immature T-cell precursors. Exerts distinct biological functions in the mammary epithelial cells and T cells in a tissue-specific manner. Necessary and sufficient for commitment of CD4 lineage, while its absence causes CD8 commitment. Development of immature T-cell precursors (thymocytes) to either the CD4 helper or CD8 killer T-cell lineages correlates precisely with their T-cell receptor specificity for major histocompatibility complex class II or class I molecules, respectively. Cross-antagonism between ZBTB7B and CBF complexes are determinative to CD4 versus CD8 cell fate decision. Suppresses RUNX3 expression and imposes CD4+ lineage fate by inducing the SOCS suppressors of cytokine signaling. induces, as a transcriptional activator, SOCS genes expression which represses RUNX3 expression and promotes the CD4+ lineage fate. During CD4 lineage commitment, associates with multiple sites at the CD8 locus, acting as a negative regulator of the CD8 promoter and enhancers by epigenetic silencing through the recruitment of class II histone deacetylases, such as HDAC4 and HDAC5, to these loci. Regulates the development of IL17-producing CD1d-restricted naural killer (NK) T cells. Also functions as an important metabolic regulator in the lactating mammary glands. Critical feed-forward regulator of insulin signaling in mammary gland lactation, directly regulates expression of insulin receptor substrate-1 (IRS-1) and insulin-induced Akt-mTOR-SREBP signaling. Transcriptional repressor of the collagen COL1A1 and COL1A2 genes. May also function as a repressor of fibronectin and possibly other extracellular matrix genes. Potent driver of brown fat development, thermogenesis and cold-induced beige fat formation. Recruits the brown fat lncRNA 1 (Blnc1):HNRNPU ribonucleoprotein complex to activate thermogenic gene expression in brown and beige adipocytes. In Homo sapiens (Human), this protein is Zinc finger and BTB domain-containing protein 7B.